A 274-amino-acid chain; its full sequence is 2-dehydro-3-deoxyphosphooctonate aldolase (274 aa).

The protein belongs to the KdsA family.

The protein resides in the cytoplasm. It carries out the reaction D-arabinose 5-phosphate + phosphoenolpyruvate + H2O = 3-deoxy-alpha-D-manno-2-octulosonate-8-phosphate + phosphate. The protein operates within carbohydrate biosynthesis; 3-deoxy-D-manno-octulosonate biosynthesis; 3-deoxy-D-manno-octulosonate from D-ribulose 5-phosphate: step 2/3. It functions in the pathway bacterial outer membrane biogenesis; lipopolysaccharide biosynthesis. This is 2-dehydro-3-deoxyphosphooctonate aldolase from Rickettsia conorii (strain ATCC VR-613 / Malish 7).